The following is a 357-amino-acid chain: Phosphoribosylformylglycinamidine cyclo-ligase (357 aa).

It belongs to the AIR synthase family.

The protein localises to the cytoplasm. The catalysed reaction is 2-formamido-N(1)-(5-O-phospho-beta-D-ribosyl)acetamidine + ATP = 5-amino-1-(5-phospho-beta-D-ribosyl)imidazole + ADP + phosphate + H(+). Its pathway is purine metabolism; IMP biosynthesis via de novo pathway; 5-amino-1-(5-phospho-D-ribosyl)imidazole from N(2)-formyl-N(1)-(5-phospho-D-ribosyl)glycinamide: step 2/2. The protein is Phosphoribosylformylglycinamidine cyclo-ligase of Rhodopseudomonas palustris (strain BisB18).